The following is a 561-amino-acid chain: MSPALAAGLQIASVVAVLALVYVPLGDYMARVYTSSSDLRAESWLYRLARVDPRAEQTWCGYAGSVLGFSLAGVLVLYVLQRIQGVLPLSHGLAGVSPAVAFNTAVSFVTNTNWQSYVPETTMSPLTQSAGLAVQNFVSAAVGMAVAVALIRGLVRVGRGGEVGNFWVDLTRGTLRILLPLAFVIALILLSQGVIQSYRSGFTGVGLDGRPVTTALAPVASQEAIKELGTNGGGVLAANSAHPFENPTPLSNVVQILAILLIPVALTRTFGTMIGNRRQGLTVLAVMAGIYAVILGVTTAAESGARGAAATAAGAMLEGKEVRFGIPGSVLFAVSTTGTSTGAVNSAHDSMSPLGGGAVLVNMLLGEIAPGGVGSGLYGILVLAVIAVFVGGLLVGRTPEFLGKKLRRREITLAALAVLVMPALVLIGTAITVVLPETAAALGNSGDPGTPGAVHGFSEVLYAYASASNNNGSAFGGLTVTSDWFQSSLGLCMLFGRFLPILFVLALAGSLAAQPRTPATAGTLPTAGAGFAGLLTGTVVLVAALTFFPVLALGPIAEALQ.

11 helical membrane-spanning segments follow: residues 5 to 25 (LAAG…YVPL), 60 to 80 (CGYA…LYVL), 86 to 106 (VLPL…NTAV), 131 to 151 (GLAV…VALI), 177 to 197 (ILLP…VIQS), 247 to 267 (PTPL…VALT), 281 to 301 (LTVL…TTAA), 376 to 396 (GLYG…LLVG), 415 to 435 (ALAV…TVVL), 489 to 509 (LGLC…ALAG), and 531 to 551 (FAGL…FPVL).

It belongs to the KdpA family. In terms of assembly, the system is composed of three essential subunits: KdpA, KdpB and KdpC.

The protein resides in the cell membrane. Functionally, part of the high-affinity ATP-driven potassium transport (or Kdp) system, which catalyzes the hydrolysis of ATP coupled with the electrogenic transport of potassium into the cytoplasm. This subunit binds the extracellular potassium ions and delivers the ions to the membrane domain of KdpB through an intramembrane tunnel. The sequence is that of Potassium-transporting ATPase potassium-binding subunit from Nocardia farcinica (strain IFM 10152).